The chain runs to 211 residues: Protein-L-isoaspartate O-methyltransferase (211 aa).

The active site involves Ser60.

This sequence belongs to the methyltransferase superfamily. L-isoaspartyl/D-aspartyl protein methyltransferase family.

The protein resides in the cytoplasm. It catalyses the reaction [protein]-L-isoaspartate + S-adenosyl-L-methionine = [protein]-L-isoaspartate alpha-methyl ester + S-adenosyl-L-homocysteine. Catalyzes the methyl esterification of L-isoaspartyl residues in peptides and proteins that result from spontaneous decomposition of normal L-aspartyl and L-asparaginyl residues. It plays a role in the repair and/or degradation of damaged proteins. The polypeptide is Protein-L-isoaspartate O-methyltransferase (Ectopseudomonas mendocina (strain ymp) (Pseudomonas mendocina)).